The following is a 457-amino-acid chain: Forkhead box protein N3 (457 aa).

The segment at 1–24 (MGPVMPASKKAESSGISVSSGLSQ) is disordered. Positions 13-23 (SSGISVSSGLS) are enriched in low complexity. A phosphoserine mark is found at S83, S85, and S97. The tract at residues 86–109 (PVQDLDDDTPPSPAHSDMPYDARQ) is disordered. A DNA-binding region (fork-head) is located at residues 114-210 (KPPYSFSCLI…QALKKTPYHP (97 aa)). The disordered stretch occupies residues 285–422 (RTESEPPCGS…PESDDEEMKE (138 aa)). Low complexity-rich tracts occupy residues 308–331 (SSAK…SSSS) and 342–353 (GSQEGSEGSFQS). The span at 354–376 (HESHSEPEEEDRKPSPKEGKDAL) shows a compositional bias: basic and acidic residues. Residues 384–396 (QHKKRQHFAKARK) are compositionally biased toward basic residues. S415 carries the phosphoserine modification.

As to quaternary structure, interacts through its C-terminus with the C-terminus of SNW1/SKIP.

Its subcellular location is the nucleus. Its function is as follows. Acts as a transcriptional repressor. May be involved in DNA damage-inducible cell cycle arrests (checkpoints). The polypeptide is Forkhead box protein N3 (Foxn3) (Mus musculus (Mouse)).